We begin with the raw amino-acid sequence, 101 residues long: Small ribosomal subunit protein uS14 (101 aa).

It belongs to the universal ribosomal protein uS14 family. Part of the 30S ribosomal subunit. Contacts proteins S3 and S10.

Its function is as follows. Binds 16S rRNA, required for the assembly of 30S particles and may also be responsible for determining the conformation of the 16S rRNA at the A site. The chain is Small ribosomal subunit protein uS14 from Shewanella baltica (strain OS155 / ATCC BAA-1091).